A 110-amino-acid polypeptide reads, in one-letter code: Large ribosomal subunit protein uL22 (110 aa).

This sequence belongs to the universal ribosomal protein uL22 family. In terms of assembly, part of the 50S ribosomal subunit.

Functionally, this protein binds specifically to 23S rRNA; its binding is stimulated by other ribosomal proteins, e.g. L4, L17, and L20. It is important during the early stages of 50S assembly. It makes multiple contacts with different domains of the 23S rRNA in the assembled 50S subunit and ribosome. Its function is as follows. The globular domain of the protein is located near the polypeptide exit tunnel on the outside of the subunit, while an extended beta-hairpin is found that lines the wall of the exit tunnel in the center of the 70S ribosome. This is Large ribosomal subunit protein uL22 from Acidovorax ebreus (strain TPSY) (Diaphorobacter sp. (strain TPSY)).